The sequence spans 347 residues: S-adenosylmethionine:tRNA ribosyltransferase-isomerase (347 aa).

Belongs to the QueA family. As to quaternary structure, monomer.

It localises to the cytoplasm. It catalyses the reaction 7-aminomethyl-7-carbaguanosine(34) in tRNA + S-adenosyl-L-methionine = epoxyqueuosine(34) in tRNA + adenine + L-methionine + 2 H(+). It functions in the pathway tRNA modification; tRNA-queuosine biosynthesis. Its function is as follows. Transfers and isomerizes the ribose moiety from AdoMet to the 7-aminomethyl group of 7-deazaguanine (preQ1-tRNA) to give epoxyqueuosine (oQ-tRNA). This is S-adenosylmethionine:tRNA ribosyltransferase-isomerase from Bordetella bronchiseptica (strain ATCC BAA-588 / NCTC 13252 / RB50) (Alcaligenes bronchisepticus).